The following is a 291-amino-acid chain: 4-hydroxy-tetrahydrodipicolinate synthase (291 aa).

Residue Thr44 coordinates pyruvate. Residue Tyr132 is the Proton donor/acceptor of the active site. Lys160 serves as the catalytic Schiff-base intermediate with substrate. Val202 serves as a coordination point for pyruvate.

This sequence belongs to the DapA family. In terms of assembly, homotetramer; dimer of dimers.

It is found in the cytoplasm. It carries out the reaction L-aspartate 4-semialdehyde + pyruvate = (2S,4S)-4-hydroxy-2,3,4,5-tetrahydrodipicolinate + H2O + H(+). It participates in amino-acid biosynthesis; L-lysine biosynthesis via DAP pathway; (S)-tetrahydrodipicolinate from L-aspartate: step 3/4. Its function is as follows. Catalyzes the condensation of (S)-aspartate-beta-semialdehyde [(S)-ASA] and pyruvate to 4-hydroxy-tetrahydrodipicolinate (HTPA). The chain is 4-hydroxy-tetrahydrodipicolinate synthase from Clostridium perfringens (strain 13 / Type A).